A 360-amino-acid chain; its full sequence is S-adenosylmethionine:tRNA ribosyltransferase-isomerase (360 aa).

This sequence belongs to the QueA family. Monomer.

The protein resides in the cytoplasm. It catalyses the reaction 7-aminomethyl-7-carbaguanosine(34) in tRNA + S-adenosyl-L-methionine = epoxyqueuosine(34) in tRNA + adenine + L-methionine + 2 H(+). It participates in tRNA modification; tRNA-queuosine biosynthesis. Functionally, transfers and isomerizes the ribose moiety from AdoMet to the 7-aminomethyl group of 7-deazaguanine (preQ1-tRNA) to give epoxyqueuosine (oQ-tRNA). This chain is S-adenosylmethionine:tRNA ribosyltransferase-isomerase, found in Burkholderia pseudomallei (strain 1106a).